A 359-amino-acid chain; its full sequence is Homoserine dehydrogenase (359 aa).

Residues Ala-13, Val-15, Val-16, and Ala-41 each coordinate NAD(+). Residue Val-16 participates in NADP(+) binding. An NADPH-binding site is contributed by Val-16. 4 residues coordinate NADPH: Lys-60, Thr-93, Ser-94, and Lys-117. An NAD(+)-binding site is contributed by Thr-93. Thr-93 provides a ligand contact to NADP(+). Lys-117 contributes to the NADP(+) binding site. Positions 143, 146, 148, and 150 each coordinate Na(+). NADP(+) is bound by residues Gly-205 and Glu-208. Glu-208 and Asp-219 together coordinate L-homoserine. Catalysis depends on Lys-223, which acts as the Proton donor. Lys-290 participates in a covalent cross-link: Glycyl lysine isopeptide (Lys-Gly) (interchain with G-Cter in ubiquitin). Gly-340 lines the NAD(+) pocket. NADP(+) is bound at residue Gly-340. Residue Gly-340 participates in NADPH binding.

Belongs to the homoserine dehydrogenase family. Homodimer. It depends on a metal cation as a cofactor.

It carries out the reaction L-homoserine + NADP(+) = L-aspartate 4-semialdehyde + NADPH + H(+). It catalyses the reaction L-homoserine + NAD(+) = L-aspartate 4-semialdehyde + NADH + H(+). The protein operates within amino-acid biosynthesis; L-methionine biosynthesis via de novo pathway; L-homoserine from L-aspartate: step 3/3. It functions in the pathway amino-acid biosynthesis; L-threonine biosynthesis; L-threonine from L-aspartate: step 3/5. Catalyzes the conversion of L-aspartate-beta-semialdehyde (L-Asa) to L-homoserine (L-Hse), the third step in the biosynthesis of amino acids that derive from aspartate (the aspartate family of amino acids), including methioinine and threonine, the latter of which is a precursor to isoleucine; production of homoserine leads to a branch-point in the pathway as it can either be O-phosphorylated for processing to threonine, or O-acylated for processing to methionine. The chain is Homoserine dehydrogenase (HOM6) from Saccharomyces cerevisiae (strain ATCC 204508 / S288c) (Baker's yeast).